Here is an 842-residue protein sequence, read N- to C-terminus: ATP-binding cassette sub-family B member 6 (842 aa).

Residues 1 to 26 lie on the Lumenal side of the membrane; it reads MVTVGNYCEAEGPVGPAWMQDGLSPC. The interval 1-205 is required for the lysosomal targeting; it reads MVTVGNYCEA…SGGLFVLGLW (205 aa). The segment at 1 to 236 is required for ATPase activity; the sequence is MVTVGNYCEA…RSQVRSAAQQ (236 aa). Asn-6 is a glycosylation site (N-linked (GlcNAc...) asparagine). A disulfide bridge connects residues Cys-8 and Cys-26. The chain crosses the membrane as a helical span at residues 27-47; sequence FFFTLVPSTRMALGTLALVLA. Residues 48–72 are Cytoplasmic-facing; the sequence is LPCRRRERPAGADSLSWGAGPRISP. A helical transmembrane segment spans residues 73-93; that stretch reads YVLQLLLATLQAALPLAGLAG. Residues 94–106 are Lumenal-facing; sequence RVGTARGAPLPSY. A helical transmembrane segment spans residues 107-127; the sequence is LLLASVLESLAGACGLWLLVV. Residues 128–147 are Cytoplasmic-facing; it reads ERSQARQRLAMGIWIKFRHS. The chain crosses the membrane as a helical span at residues 148–168; it reads PGLLLLWTVAFAAENLALVSW. Over 169–185 the chain is Lumenal; the sequence is NSPQWWWARADLGQQVQ. Residues 186–206 form a helical membrane-spanning segment; sequence FSLWVLRYVVSGGLFVLGLWA. Residues 207–263 are Cytoplasmic-facing; the sequence is PGLRPQSYTLQVHEEDQDVERSQVRSAAQQSTWRDFGRKLRLLSGYLWPRGSPALQL. Residues 264–284 form a helical membrane-spanning segment; that stretch reads VVLICLGLMGLERALNVLVPI. The ABC transmembrane type-1 domain maps to 265–556; the sequence is VLICLGLMGL…FGTYYRMIQT (292 aa). Topologically, residues 285 to 291 are lumenal; it reads FYRNIVN. The chain crosses the membrane as a helical span at residues 292 to 312; the sequence is LLTEKAPWNSLAWTVTSYVFL. At 313–375 the chain is on the cytoplasmic side; it reads KFLQGGGTGS…TGEVLRIADR (63 aa). The chain crosses the membrane as a helical span at residues 376–396; that stretch reads GTSSVTGLLSYLVFNVIPTLA. Asp-397 is a topological domain (lumenal). The helical transmembrane segment at 398-418 threads the bilayer; that stretch reads IIIGIIYFSMFFNAWFGLIVF. The Cytoplasmic portion of the chain corresponds to 419–499; it reads LCMSLYLTLT…SSASLVLLNQ (81 aa). A helical transmembrane segment spans residues 500–520; that stretch reads TQNLVIGLGLLAGSLLCAYFV. Residues 521-529 are Lumenal-facing; it reads TEQKLQVGD. Residues 530–550 traverse the membrane as a helical segment; the sequence is YVLFGTYIIQLYMPLNWFGTY. The Cytoplasmic portion of the chain corresponds to 551–842; the sequence is YRMIQTNFID…EDTKPQTMER (292 aa). One can recognise an ABC transporter domain in the interval 590–824; sequence IEFENVHFSY…GGVYADMWQL (235 aa). ATP contacts are provided by residues Tyr-599 and 623–634; that span reads GPSGAGKSTILR.

Belongs to the ABC transporter superfamily. ABCB family. Heavy Metal importer (TC 3.A.1.210) subfamily. In terms of assembly, homodimer. In terms of processing, N-glycosylated. As to expression, widely expressed. High expression is detected in the retinal epithelium. Expressed in mature erythrocytes.

Its subcellular location is the cell membrane. The protein resides in the mitochondrion outer membrane. The protein localises to the endoplasmic reticulum membrane. It localises to the golgi apparatus membrane. It is found in the endosome membrane. Its subcellular location is the lysosome membrane. The protein resides in the late endosome membrane. The protein localises to the early endosome membrane. It localises to the secreted. It is found in the extracellular exosome. Its subcellular location is the mitochondrion. The protein resides in the endosome. The protein localises to the multivesicular body membrane. It localises to the melanosome membrane. It catalyses the reaction heme b(in) + ATP + H2O = heme b(out) + ADP + phosphate + H(+). It carries out the reaction coproporphyrin III(in) + ATP + H2O = coproporphyrin III(out) + ADP + phosphate + H(+). The enzyme catalyses pheophorbide a(in) + ATP + H2O = pheophorbide a(out) + ADP + phosphate + H(+). The catalysed reaction is coproporphyrinogen III(in) + ATP + H2O = coproporphyrinogen III(out) + ADP + phosphate + H(+). It catalyses the reaction protoporphyrin IX(in) + ATP + H2O = protoporphyrin IX(out) + ADP + phosphate + H(+). It carries out the reaction coproporphyrin I(in) + ATP + H2O = coproporphyrin I(out) + ADP + phosphate + H(+). The enzyme catalyses uroporphyrin I(in) + ATP + H2O = uroporphyrin I(out) + ADP + phosphate + H(+). The catalysed reaction is uroporphyrin III(in) + ATP + H2O = uroporphyrin III(out) + ADP + phosphate + H(+). ATPase activity is inhibited by MgATP with an IC(50) of 1.03 mM and up-regulated by coporphyrin III&gt; hemin &gt; protoporphyrin IX. ATPase activity for hemin is up-regulated by glutathione. The ATPase activity is impaired by increasing copper concentrations (0-300 uM). The ATPase activity is stimulated in presence of glutathione for increasing copper concentrations (0-300 uM). ATP-dependent transporter that catalyzes the transport of a broad-spectrum of porphyrins from the cytoplasm to the extracellular space through the plasma membrane or into the vesicle lumen. May also function as an ATP-dependent importer of porphyrins from the cytoplasm into the mitochondria, in turn may participate in the de novo heme biosynthesis regulation and in the coordination of heme and iron homeostasis during phenylhydrazine stress. May also play a key role in the early steps of melanogenesis producing PMEL amyloid fibrils. In vitro, it confers to cells a resistance to toxic metal such as arsenic and cadmium and against chemotherapeutics agent such as 5-fluorouracil, SN-38 and vincristin. In addition may play a role in the transition metal homeostasis. In Homo sapiens (Human), this protein is ATP-binding cassette sub-family B member 6.